A 274-amino-acid polypeptide reads, in one-letter code: NADPH-dependent 7-cyano-7-deazaguanine reductase (274 aa).

Substrate is bound at residue 80–82 (VES). Residue 82 to 83 (SK) participates in NADPH binding. Cys-181 functions as the Thioimide intermediate in the catalytic mechanism. Asp-188 acts as the Proton donor in catalysis. 220 to 221 (HE) is a binding site for substrate. 249–250 (RG) is a binding site for NADPH.

This sequence belongs to the GTP cyclohydrolase I family. QueF type 2 subfamily. Homodimer.

It is found in the cytoplasm. The catalysed reaction is 7-aminomethyl-7-carbaguanine + 2 NADP(+) = 7-cyano-7-deazaguanine + 2 NADPH + 3 H(+). It functions in the pathway tRNA modification; tRNA-queuosine biosynthesis. Its function is as follows. Catalyzes the NADPH-dependent reduction of 7-cyano-7-deazaguanine (preQ0) to 7-aminomethyl-7-deazaguanine (preQ1). The polypeptide is NADPH-dependent 7-cyano-7-deazaguanine reductase (Burkholderia pseudomallei (strain 1710b)).